The sequence spans 87 residues: Large ribosomal subunit protein bL27 (87 aa).

Positions 1–21 (MAHKKGQGSTQNNRDSAGRRL) are disordered.

Belongs to the bacterial ribosomal protein bL27 family.

The sequence is that of Large ribosomal subunit protein bL27 from Nautilia profundicola (strain ATCC BAA-1463 / DSM 18972 / AmH).